The following is a 434-amino-acid chain: Probable exopolygalacturonase X (434 aa).

Residues 1–23 (MKFLHTVAQTATLLLSLGASVEG) form the signal peptide. The segment at 35-54 (HHPFRPLPASTPRTKTCHVR) is disordered. Residues asparagine 113, asparagine 129, and asparagine 199 are each glycosylated (N-linked (GlcNAc...) asparagine). The stretch at 231–252 (SSNIVIQNSVVNNGDDCVSFKP) is one PbH1 1 repeat. Aspartate 245 acts as the Proton donor in catalysis. Cysteines 247 and 264 form a disulfide. N-linked (GlcNAc...) asparagine glycans are attached at residues asparagine 253 and asparagine 265. The stretch at 254-274 (STDILVQNMHCNGSHGISVGS) is one PbH1 2 repeat. The active site involves histidine 268. 5 N-linked (GlcNAc...) asparagine glycosylation sites follow: asparagine 292, asparagine 297, asparagine 329, asparagine 354, and asparagine 364. A PbH1 3 repeat occupies 327–348 (VSNITYDRMYIENVDWAIEVTQ). The stretch at 362–394 (PSNLTISDVHIKNMWGTTSGKRDPNVGTIVCSS) is one PbH1 4 repeat. Cysteine 392 and cysteine 398 are joined by a disulfide. N-linked (GlcNAc...) asparagine glycosylation is found at asparagine 407 and asparagine 430.

Belongs to the glycosyl hydrolase 28 family.

Its subcellular location is the secreted. The enzyme catalyses [(1-&gt;4)-alpha-D-galacturonosyl](n) + H2O = alpha-D-galacturonate + [(1-&gt;4)-alpha-D-galacturonosyl](n-1). Its function is as follows. Specific in hydrolyzing the terminal glycosidic bond of polygalacturonic acid and oligogalacturonates. This chain is Probable exopolygalacturonase X (pgaX), found in Aspergillus terreus (strain NIH 2624 / FGSC A1156).